A 299-amino-acid chain; its full sequence is MSLSVLSRKEKEKVIHRLLVQAPPGEFVNAFDDLCLLIRDEKLMHHQGECAGHQHCQKYCVPLCIDGNPVLLSHHNVMGDFRFFDYQSKLSFRFDLLQNQLRDIQSHGIIRNETEYLRSVVMCALKLYVNDHYPNGNCNVLRKTVKSKEFLIACIEDHSYDNGECWNGLWKSKWIFQVNPFLTQVTGRIFVQAHFFRCVNLHIEVSKDLKESLEVVNQAQLALSFARLVEEQENKFQAAVIEELQELSNEALRKILRRDLPVTRTLIDWQRILSDLNLVMYPKLGYVIYSRSVLCNWII.

Residues serine 2 and serine 290 each carry the phosphoserine modification.

This sequence belongs to the F-actin-capping protein alpha subunit family. As to quaternary structure, component of the F-actin capping complex, composed of a heterodimer of an alpha and a beta subunit. Component of the WASH complex, composed of F-actin-capping protein subunit alpha (CAPZA1, CAPZA2 or CAPZA3), F-actin-capping protein subunit beta (CAPZB), WASHC1, WASHC2, WASHC3, WASHC4 and WASHC5. In terms of tissue distribution, exclusively expressed in the testis.

The protein resides in the cytoplasm. It localises to the cytoskeleton. F-actin-capping proteins bind in a Ca(2+)-independent manner to the fast growing ends of actin filaments (barbed end) thereby blocking the exchange of subunits at these ends. Unlike other capping proteins (such as gelsolin and severin), these proteins do not sever actin filaments. May play a role in the morphogenesis of spermatid. The protein is F-actin-capping protein subunit alpha-3 (Capza3) of Mus musculus (Mouse).